Here is a 352-residue protein sequence, read N- to C-terminus: Phosphoribosylformylglycinamidine cyclo-ligase (352 aa).

It belongs to the AIR synthase family.

It localises to the cytoplasm. The enzyme catalyses 2-formamido-N(1)-(5-O-phospho-beta-D-ribosyl)acetamidine + ATP = 5-amino-1-(5-phospho-beta-D-ribosyl)imidazole + ADP + phosphate + H(+). It participates in purine metabolism; IMP biosynthesis via de novo pathway; 5-amino-1-(5-phospho-D-ribosyl)imidazole from N(2)-formyl-N(1)-(5-phospho-D-ribosyl)glycinamide: step 2/2. This is Phosphoribosylformylglycinamidine cyclo-ligase from Stenotrophomonas maltophilia (strain K279a).